Reading from the N-terminus, the 329-residue chain is uncharacterized protein (329 aa).

Positions 109–147 (KALGNDQTSSMTSSTTAVTVAKSGDGQQQTGEQKEEDWK) are disordered. The span at 116–131 (TSSMTSSTTAVTVAKS) shows a compositional bias: low complexity.

The protein to the C-terminal of MG321/MPN_456.

This is an uncharacterized protein from Mycoplasma pneumoniae (strain ATCC 29342 / M129 / Subtype 1) (Mycoplasmoides pneumoniae).